The sequence spans 474 residues: Magnesium transporter MRS2-A, chloroplastic (474 aa).

The N-terminal 55 residues, 1–55 (MASVSSSPSYSSQAAVLLLLHQPPHQHGHGGACLRYRGSQSQGRGNAVATSLGLS), are a transit peptide targeting the chloroplast. A disordered region spans residues 79-129 (GKDGRAVTKDEEEEAAAAAVEEEGEVEVRREEDKPGDDGSREAAARGSGSG). Residues 88–103 (DEEEEAAAAAVEEEGE) are compositionally biased toward acidic residues. Over residues 104–122 (VEVRREEDKPGDDGSREAA) the composition is skewed to basic and acidic residues. 2 helical membrane passes run 412–432 (LLLQ…GIFG) and 444–464 (WAFW…FFIM). The Required for magnesium transport activity motif lies at 432 to 434 (GMN).

It belongs to the CorA metal ion transporter (MIT) (TC 1.A.35.5) family.

It localises to the plastid. Its subcellular location is the chloroplast membrane. Magnesium transporter that may mediate the influx of magnesium in chloroplast. The chain is Magnesium transporter MRS2-A, chloroplastic (MRS2-A) from Oryza sativa subsp. japonica (Rice).